We begin with the raw amino-acid sequence, 386 residues long: MPTTEADTTPASATLALAFDLLRRHSVTPNDAGCQALMIERLERLGFQVERLRIGEVDNFWATRGETGPLLVFAGHTDVVPTGPESDWQYPPFTPRIDADGMLCGRGAADMKGSLAAMVTAVETFIEAHPDHHGRLGFLITADEEGPAVHGTRAVVEHLREKGVAPDYCIVGEPSSSERLGDTLKNGRRGSLGGTLRVKGVQGHVAYPHLARNPVHEAAPALAALAEAQWDAGNAFFPATSFQISNLQAGTGASNVIPGQLEAVFNFRFSTEVTAEALKARTTEILDRFALDYTIDWTLNGEPFLTTEGALIDATVASVEDVLGYRPQLSTGGGTSDGRFIATLGAQVIELGPVNATIHKVDERIRAADLETLSRLYATIMQRLFT.

H76 provides a ligand contact to Zn(2+). The active site involves D78. Zn(2+) is bound at residue D110. E144 (proton acceptor) is an active-site residue. Zn(2+)-binding residues include E145, E173, and H359.

The protein belongs to the peptidase M20A family. DapE subfamily. As to quaternary structure, homodimer. Requires Zn(2+) as cofactor. The cofactor is Co(2+).

The catalysed reaction is N-succinyl-(2S,6S)-2,6-diaminopimelate + H2O = (2S,6S)-2,6-diaminopimelate + succinate. It participates in amino-acid biosynthesis; L-lysine biosynthesis via DAP pathway; LL-2,6-diaminopimelate from (S)-tetrahydrodipicolinate (succinylase route): step 3/3. Catalyzes the hydrolysis of N-succinyl-L,L-diaminopimelic acid (SDAP), forming succinate and LL-2,6-diaminopimelate (DAP), an intermediate involved in the bacterial biosynthesis of lysine and meso-diaminopimelic acid, an essential component of bacterial cell walls. This chain is Succinyl-diaminopimelate desuccinylase, found in Chromohalobacter salexigens (strain ATCC BAA-138 / DSM 3043 / CIP 106854 / NCIMB 13768 / 1H11).